The following is a 174-amino-acid chain: B3 domain-containing protein At2g31862 (174 aa).

The segment at residues 1–71 is a DNA-binding region (TF-B3); it reads MWVNLSCMCH…KLYIALVPLD (71 aa).

The protein localises to the nucleus. In Arabidopsis thaliana (Mouse-ear cress), this protein is B3 domain-containing protein At2g31862.